The primary structure comprises 304 residues: Acetyl-coenzyme A carboxylase carboxyl transferase subunit beta (304 aa).

Positions 25 to 294 constitute a CoA carboxyltransferase N-terminal domain; the sequence is LWIKCPETGE…EAARRESGSQ (270 aa).

It belongs to the AccD/PCCB family. Acetyl-CoA carboxylase is a heterohexamer composed of biotin carboxyl carrier protein (AccB), biotin carboxylase (AccC) and two subunits each of ACCase subunit alpha (AccA) and ACCase subunit beta (AccD).

Its subcellular location is the cytoplasm. It carries out the reaction N(6)-carboxybiotinyl-L-lysyl-[protein] + acetyl-CoA = N(6)-biotinyl-L-lysyl-[protein] + malonyl-CoA. Its pathway is lipid metabolism; malonyl-CoA biosynthesis; malonyl-CoA from acetyl-CoA: step 1/1. In terms of biological role, component of the acetyl coenzyme A carboxylase (ACC) complex. Biotin carboxylase (BC) catalyzes the carboxylation of biotin on its carrier protein (BCCP) and then the CO(2) group is transferred by the transcarboxylase to acetyl-CoA to form malonyl-CoA. This Sinorhizobium fredii (strain NBRC 101917 / NGR234) protein is Acetyl-coenzyme A carboxylase carboxyl transferase subunit beta.